The chain runs to 238 residues: Fatty acid metabolism regulator protein (238 aa).

The HTH gntR-type domain occupies 6–74 (KGPASFAEKY…HGKPTRVNNF (69 aa)). The H-T-H motif DNA-binding region spans 34 to 53 (ERELSELIGVTRTTLREVLQ).

Homodimer.

It is found in the cytoplasm. Functionally, multifunctional regulator of fatty acid metabolism. The polypeptide is Fatty acid metabolism regulator protein (Shewanella baltica (strain OS223)).